Reading from the N-terminus, the 665-residue chain is Fructose-1,6-bisphosphatase class 3 (665 aa).

This sequence belongs to the FBPase class 3 family. Requires Mn(2+) as cofactor.

The enzyme catalyses beta-D-fructose 1,6-bisphosphate + H2O = beta-D-fructose 6-phosphate + phosphate. The protein operates within carbohydrate biosynthesis; gluconeogenesis. The polypeptide is Fructose-1,6-bisphosphatase class 3 (Alkaliphilus metalliredigens (strain QYMF)).